The following is a 211-amino-acid chain: Type II secretion system protein J (211 aa).

Residues 1–7 (MRPRAAG) constitute a propeptide, leader sequence. N-methylphenylalanine is present on F8. A helical membrane pass occupies residues 8–28 (FTLIEVLLATMLLVGGLALAF).

Belongs to the GSP J family.

It is found in the membrane. Involved in a type II secretion system (T2SS, formerly general secretion pathway, GSP) for the export of proteins. This chain is Type II secretion system protein J (xpsJ), found in Xanthomonas campestris pv. campestris (strain ATCC 33913 / DSM 3586 / NCPPB 528 / LMG 568 / P 25).